The primary structure comprises 375 residues: Quinolinate synthase (375 aa).

The iminosuccinate site is built by histidine 47 and serine 64. A [4Fe-4S] cluster-binding site is contributed by cysteine 110. Residues 144-146 and serine 165 contribute to the iminosuccinate site; that span reads YVN. A [4Fe-4S] cluster-binding site is contributed by cysteine 235. Iminosuccinate is bound by residues 261–263 and threonine 278; that span reads HPE. Cysteine 325 is a [4Fe-4S] cluster binding site.

Belongs to the quinolinate synthase family. Type 3 subfamily. The cofactor is [4Fe-4S] cluster.

The protein resides in the cytoplasm. The catalysed reaction is iminosuccinate + dihydroxyacetone phosphate = quinolinate + phosphate + 2 H2O + H(+). Its pathway is cofactor biosynthesis; NAD(+) biosynthesis; quinolinate from iminoaspartate: step 1/1. Its function is as follows. Catalyzes the condensation of iminoaspartate with dihydroxyacetone phosphate to form quinolinate. This is Quinolinate synthase from Herpetosiphon aurantiacus (strain ATCC 23779 / DSM 785 / 114-95).